The primary structure comprises 280 residues: Urease accessory protein UreD (280 aa).

This sequence belongs to the UreD family. In terms of assembly, ureD, UreF and UreG form a complex that acts as a GTP-hydrolysis-dependent molecular chaperone, activating the urease apoprotein by helping to assemble the nickel containing metallocenter of UreC. The UreE protein probably delivers the nickel.

The protein resides in the cytoplasm. Its function is as follows. Required for maturation of urease via the functional incorporation of the urease nickel metallocenter. The protein is Urease accessory protein UreD of Mesorhizobium japonicum (strain LMG 29417 / CECT 9101 / MAFF 303099) (Mesorhizobium loti (strain MAFF 303099)).